Consider the following 237-residue polypeptide: Phosphoribosylaminoimidazole-succinocarboxamide synthase (237 aa).

The protein belongs to the SAICAR synthetase family.

It catalyses the reaction 5-amino-1-(5-phospho-D-ribosyl)imidazole-4-carboxylate + L-aspartate + ATP = (2S)-2-[5-amino-1-(5-phospho-beta-D-ribosyl)imidazole-4-carboxamido]succinate + ADP + phosphate + 2 H(+). Its pathway is purine metabolism; IMP biosynthesis via de novo pathway; 5-amino-1-(5-phospho-D-ribosyl)imidazole-4-carboxamide from 5-amino-1-(5-phospho-D-ribosyl)imidazole-4-carboxylate: step 1/2. The chain is Phosphoribosylaminoimidazole-succinocarboxamide synthase from Pseudomonas fluorescens (strain ATCC BAA-477 / NRRL B-23932 / Pf-5).